The following is a 157-amino-acid chain: Pyruvoyl-dependent arginine decarboxylase 2 (157 aa).

Serine 43 bears the Pyruvic acid (Ser) mark.

This sequence belongs to the PdaD family. It depends on pyruvate as a cofactor.

The catalysed reaction is L-arginine + H(+) = agmatine + CO2. This Archaeoglobus fulgidus (strain ATCC 49558 / DSM 4304 / JCM 9628 / NBRC 100126 / VC-16) protein is Pyruvoyl-dependent arginine decarboxylase 2 (pdaD2).